The chain runs to 149 residues: SsrA-binding protein (149 aa).

The segment at 121 to 149 (GKGEHDKRDTIKDREGKREVERAMKSRSR) is disordered.

This sequence belongs to the SmpB family.

It localises to the cytoplasm. Functionally, required for rescue of stalled ribosomes mediated by trans-translation. Binds to transfer-messenger RNA (tmRNA), required for stable association of tmRNA with ribosomes. tmRNA and SmpB together mimic tRNA shape, replacing the anticodon stem-loop with SmpB. tmRNA is encoded by the ssrA gene; the 2 termini fold to resemble tRNA(Ala) and it encodes a 'tag peptide', a short internal open reading frame. During trans-translation Ala-aminoacylated tmRNA acts like a tRNA, entering the A-site of stalled ribosomes, displacing the stalled mRNA. The ribosome then switches to translate the ORF on the tmRNA; the nascent peptide is terminated with the 'tag peptide' encoded by the tmRNA and targeted for degradation. The ribosome is freed to recommence translation, which seems to be the essential function of trans-translation. This Polaromonas sp. (strain JS666 / ATCC BAA-500) protein is SsrA-binding protein.